The following is a 522-amino-acid chain: Glycogen synthase (522 aa).

A disordered region spans residues 1–29 (MISAVLDTQGDHPQQQAGDRAAPSVPVPG). ADP-alpha-D-glucose is bound at residue K58.

Belongs to the glycosyltransferase 1 family. Bacterial/plant glycogen synthase subfamily.

It catalyses the reaction [(1-&gt;4)-alpha-D-glucosyl](n) + ADP-alpha-D-glucose = [(1-&gt;4)-alpha-D-glucosyl](n+1) + ADP + H(+). The protein operates within glycan biosynthesis; glycogen biosynthesis. Synthesizes alpha-1,4-glucan chains using ADP-glucose. This is Glycogen synthase from Pseudomonas fluorescens (strain ATCC BAA-477 / NRRL B-23932 / Pf-5).